The primary structure comprises 295 residues: Phosphatidylserine decarboxylase proenzyme (295 aa).

Catalysis depends on charge relay system; for autoendoproteolytic cleavage activity residues aspartate 90, histidine 147, and serine 254. Catalysis depends on serine 254, which acts as the Schiff-base intermediate with substrate; via pyruvic acid; for decarboxylase activity. A Pyruvic acid (Ser); by autocatalysis modification is found at serine 254.

This sequence belongs to the phosphatidylserine decarboxylase family. PSD-B subfamily. Prokaryotic type I sub-subfamily. In terms of assembly, heterodimer of a large membrane-associated beta subunit and a small pyruvoyl-containing alpha subunit. Requires pyruvate as cofactor. In terms of processing, is synthesized initially as an inactive proenzyme. Formation of the active enzyme involves a self-maturation process in which the active site pyruvoyl group is generated from an internal serine residue via an autocatalytic post-translational modification. Two non-identical subunits are generated from the proenzyme in this reaction, and the pyruvate is formed at the N-terminus of the alpha chain, which is derived from the carboxyl end of the proenzyme. The autoendoproteolytic cleavage occurs by a canonical serine protease mechanism, in which the side chain hydroxyl group of the serine supplies its oxygen atom to form the C-terminus of the beta chain, while the remainder of the serine residue undergoes an oxidative deamination to produce ammonia and the pyruvoyl prosthetic group on the alpha chain. During this reaction, the Ser that is part of the protease active site of the proenzyme becomes the pyruvoyl prosthetic group, which constitutes an essential element of the active site of the mature decarboxylase.

Its subcellular location is the cell membrane. It catalyses the reaction a 1,2-diacyl-sn-glycero-3-phospho-L-serine + H(+) = a 1,2-diacyl-sn-glycero-3-phosphoethanolamine + CO2. The protein operates within phospholipid metabolism; phosphatidylethanolamine biosynthesis; phosphatidylethanolamine from CDP-diacylglycerol: step 2/2. Functionally, catalyzes the formation of phosphatidylethanolamine (PtdEtn) from phosphatidylserine (PtdSer). The chain is Phosphatidylserine decarboxylase proenzyme from Sodalis glossinidius (strain morsitans).